We begin with the raw amino-acid sequence, 254 residues long: Bacteriorhodopsin-I (254 aa).

Positions 1–6 (MSQLAL) are excised as a propeptide. Residue Gln7 is modified to Pyrrolidone carboxylic acid. 7 helical membrane-spanning segments follow: residues 16–36 (EGIW…YFIA), 51–71 (VITI…FFGF), 91–111 (YADW…LAGA), 116–136 (IGAL…ATLT), 144–164 (AFWT…VAVF), 185–205 (IILV…EGLA), and 212–232 (ETLL…FILL). Lys224 bears the N6-(retinylidene)lysine mark.

Belongs to the archaeal/bacterial/fungal opsin family. In terms of processing, the covalent binding of retinal to the apoprotein, bacterioopsin, generates bacteriorhodopsin.

It localises to the cell membrane. Its function is as follows. Light-driven proton pump. The chain is Bacteriorhodopsin-I (bop1) from Haloquadratum walsbyi (strain DSM 16854 / JCM 12705 / C23).